The primary structure comprises 228 residues: Pyridoxal phosphate homeostasis protein (228 aa).

Residue Lys35 is modified to N6-(pyridoxal phosphate)lysine.

It belongs to the pyridoxal phosphate-binding protein YggS/PROSC family.

In terms of biological role, pyridoxal 5'-phosphate (PLP)-binding protein, which is involved in PLP homeostasis. This chain is Pyridoxal phosphate homeostasis protein, found in Aquifex aeolicus (strain VF5).